The primary structure comprises 115 residues: U3-lycotoxin-Ls1k (115 aa).

The first 20 residues, 1–20, serve as a signal peptide directing secretion; sequence MKFVLLFGVLVVTLFSYSSA. Positions 21–44 are excised as a propeptide; that stretch reads EMLDDFDQADEDELLSLIEKEEAR. Intrachain disulfides connect Cys48/Cys63, Cys55/Cys72, Cys62/Cys87, and Cys74/Cys85.

The protein belongs to the neurotoxin 19 (CSTX) family. 01 subfamily. Expressed by the venom gland.

It is found in the secreted. The protein is U3-lycotoxin-Ls1k of Lycosa singoriensis (Wolf spider).